The following is a 149-amino-acid chain: Glycine cleavage system H protein (149 aa).

The Lipoyl-binding domain occupies 23 to 104 (LIWVGISNHA…PYGIWLFKIN (82 aa)). An N6-lipoyllysine modification is found at Lys64.

The protein belongs to the GcvH family. The glycine cleavage system is composed of four proteins: P, T, L and H. (R)-lipoate is required as a cofactor.

Functionally, the glycine cleavage system catalyzes the degradation of glycine. The H protein shuttles the methylamine group of glycine from the P protein to the T protein. The sequence is that of Glycine cleavage system H protein from Polynucleobacter necessarius subsp. necessarius (strain STIR1).